Consider the following 272-residue polypeptide: uncharacterized protein (272 aa).

The N-terminal stretch at 1–20 (MMEPKSIFLLGLLLFRVGKL) is a signal peptide.

This is an uncharacterized protein from Caenorhabditis elegans.